We begin with the raw amino-acid sequence, 301 residues long: Probable alpha-L-glutamate ligase 1 (301 aa).

The 184-residue stretch at 104-287 (LQLLSRKGIG…VTEPIVEYIE (184 aa)) folds into the ATP-grasp domain. ATP is bound by residues lysine 141, 178–179 (EY), aspartate 187, and 211–213 (RSN). The Mg(2+) site is built by aspartate 248, glutamate 260, and asparagine 262. The Mn(2+) site is built by aspartate 248, glutamate 260, and asparagine 262.

Belongs to the RimK family. Mg(2+) serves as cofactor. Requires Mn(2+) as cofactor.

The chain is Probable alpha-L-glutamate ligase 1 from Shewanella sp. (strain MR-4).